The sequence spans 286 residues: Bifunctional protein FolD (286 aa).

Residues 165–167 and Ser-190 each bind NADP(+); that span reads GRS.

This sequence belongs to the tetrahydrofolate dehydrogenase/cyclohydrolase family. As to quaternary structure, homodimer.

The enzyme catalyses (6R)-5,10-methylene-5,6,7,8-tetrahydrofolate + NADP(+) = (6R)-5,10-methenyltetrahydrofolate + NADPH. The catalysed reaction is (6R)-5,10-methenyltetrahydrofolate + H2O = (6R)-10-formyltetrahydrofolate + H(+). Its pathway is one-carbon metabolism; tetrahydrofolate interconversion. Catalyzes the oxidation of 5,10-methylenetetrahydrofolate to 5,10-methenyltetrahydrofolate and then the hydrolysis of 5,10-methenyltetrahydrofolate to 10-formyltetrahydrofolate. This is Bifunctional protein FolD from Burkholderia cenocepacia (strain ATCC BAA-245 / DSM 16553 / LMG 16656 / NCTC 13227 / J2315 / CF5610) (Burkholderia cepacia (strain J2315)).